The sequence spans 446 residues: Coagulation factor VII (446 aa).

The signal sequence occupies residues 1–24 (MVPQTHGLLLLYFLLQLQGPLGAV). Residues 25–41 (VFITQEEAHGVLHRQRR) constitute a propeptide that is removed on maturation. The 45-residue stretch at 42–86 (ANSLLEELWSSSLERECNEERCSFEEAREIFKSPERTKQFWTIYS) folds into the Gla domain. Residues Glu47, Glu48, Glu55, Glu57, Glu60, Glu61, Glu66, Glu67, Glu70, and Glu76 each carry the 4-carboxyglutamate modification. Residues Cys58 and Cys63 are joined by a disulfide bond. Positions 87–123 (DGDQCASNPCQNGGTCQDHLKSYVCFCPLDFEGRNCE) constitute an EGF-like 1; calcium-binding domain. 10 cysteine pairs are disulfide-bonded: Cys91–Cys102, Cys96–Cys111, Cys113–Cys122, Cys132–Cys143, Cys139–Cys153, Cys155–Cys168, Cys176–Cys303, Cys200–Cys205, Cys219–Cys235, and Cys351–Cys370. Ser93 carries an O-linked (Glc...) serine; alternate glycan. Residue Ser93 is glycosylated (O-linked (Xyl...) serine; alternate). Thr101 is a glycosylation site (O-linked (Fuc) threonine). Residue Asp104 is modified to (3R)-3-hydroxyaspartate. In terms of domain architecture, EGF-like 2 spans 128–169 (EQLICANENGDCDQYCRDHVGTKRTCSCHEDYVLQPDEVSCK). A glycan (N-linked (GlcNAc...) asparagine) is linked at Asn186. One can recognise a Peptidase S1 domain in the interval 194–433 (IVGGYVCPKG…YIDWLVKYMD (240 aa)). His234 (charge relay system) is an active-site residue. N-linked (GlcNAc...) asparagine glycosylation is present at Asn244. Asp283 serves as the catalytic Charge relay system. Residue Asp379 participates in substrate binding. A disulfide bridge connects residues Cys381 and Cys409. The active-site Charge relay system is Ser385.

This sequence belongs to the peptidase S1 family. In terms of assembly, heterodimer of a light chain and a heavy chain linked by a disulfide bond. Post-translationally, the vitamin K-dependent, enzymatic carboxylation of some glutamate residues allows the modified protein to bind calcium. In terms of processing, the iron and 2-oxoglutarate dependent 3-hydroxylation of aspartate and asparagine is (R) stereospecific within EGF domains. Can be either O-glucosylated or O-xylosylated at Ser-93 by POGLUT1. As to expression, plasma.

Its subcellular location is the secreted. It catalyses the reaction Selective cleavage of Arg-|-Ile bond in factor X to form factor Xa.. Its function is as follows. Initiates the extrinsic pathway of blood coagulation. Serine protease that circulates in the blood in a zymogen form. Factor VII is converted to factor VIIa by factor Xa, factor XIIa, factor IXa, or thrombin by minor proteolysis. In the presence of tissue factor and calcium ions, factor VIIa then converts factor X to factor Xa by limited proteolysis. Factor VIIa also converts factor IX to factor IXa in the presence of tissue factor and calcium. The chain is Coagulation factor VII (F7) from Rattus norvegicus (Rat).